The primary structure comprises 161 residues: Endoribonuclease YbeY (161 aa).

Zn(2+)-binding residues include H121, H125, and H131.

The protein belongs to the endoribonuclease YbeY family. The cofactor is Zn(2+).

The protein localises to the cytoplasm. Functionally, single strand-specific metallo-endoribonuclease involved in late-stage 70S ribosome quality control and in maturation of the 3' terminus of the 16S rRNA. The polypeptide is Endoribonuclease YbeY (Xanthomonas axonopodis pv. citri (strain 306)).